We begin with the raw amino-acid sequence, 234 residues long: Urease accessory protein UreF (234 aa).

This sequence belongs to the UreF family. In terms of assembly, ureD, UreF and UreG form a complex that acts as a GTP-hydrolysis-dependent molecular chaperone, activating the urease apoprotein by helping to assemble the nickel containing metallocenter of UreC. The UreE protein probably delivers the nickel.

The protein resides in the cytoplasm. In terms of biological role, required for maturation of urease via the functional incorporation of the urease nickel metallocenter. The sequence is that of Urease accessory protein UreF from Kocuria rhizophila (strain ATCC 9341 / DSM 348 / NBRC 103217 / DC2201).